Here is a 364-residue protein sequence, read N- to C-terminus: Phosphoserine aminotransferase (364 aa).

Arg-42 contributes to the L-glutamate binding site. Pyridoxal 5'-phosphate-binding positions include 76–77, Trp-102, Thr-156, Asp-175, and Gln-198; that span reads GR. The residue at position 199 (Lys-199) is an N6-(pyridoxal phosphate)lysine. 240–241 is a pyridoxal 5'-phosphate binding site; sequence NT.

It belongs to the class-V pyridoxal-phosphate-dependent aminotransferase family. SerC subfamily. In terms of assembly, homodimer. Pyridoxal 5'-phosphate serves as cofactor.

It localises to the cytoplasm. The enzyme catalyses O-phospho-L-serine + 2-oxoglutarate = 3-phosphooxypyruvate + L-glutamate. It carries out the reaction 4-(phosphooxy)-L-threonine + 2-oxoglutarate = (R)-3-hydroxy-2-oxo-4-phosphooxybutanoate + L-glutamate. It functions in the pathway amino-acid biosynthesis; L-serine biosynthesis; L-serine from 3-phospho-D-glycerate: step 2/3. Its pathway is cofactor biosynthesis; pyridoxine 5'-phosphate biosynthesis; pyridoxine 5'-phosphate from D-erythrose 4-phosphate: step 3/5. Functionally, catalyzes the reversible conversion of 3-phosphohydroxypyruvate to phosphoserine and of 3-hydroxy-2-oxo-4-phosphonooxybutanoate to phosphohydroxythreonine. This chain is Phosphoserine aminotransferase, found in Shewanella woodyi (strain ATCC 51908 / MS32).